Consider the following 311-residue polypeptide: Tyrosine recombinase XerD (311 aa).

In terms of domain architecture, Core-binding (CB) spans 2-95 (KTLALQLQGY…AVRGLHRFAA (94 aa)). Positions 116 to 304 (RLPKSLTIDE…TVHALREVWA (189 aa)) constitute a Tyr recombinase domain. Catalysis depends on residues Arg-160, Lys-184, His-256, Arg-259, and His-282. Tyr-291 (O-(3'-phospho-DNA)-tyrosine intermediate) is an active-site residue.

It belongs to the 'phage' integrase family. XerD subfamily. In terms of assembly, forms a cyclic heterotetrameric complex composed of two molecules of XerC and two molecules of XerD.

The protein localises to the cytoplasm. Site-specific tyrosine recombinase, which acts by catalyzing the cutting and rejoining of the recombining DNA molecules. The XerC-XerD complex is essential to convert dimers of the bacterial chromosome into monomers to permit their segregation at cell division. It also contributes to the segregational stability of plasmids. This Mycobacterium tuberculosis (strain CDC 1551 / Oshkosh) protein is Tyrosine recombinase XerD.